Here is a 750-residue protein sequence, read N- to C-terminus: Penicillin-binding protein 2x (750 aa).

The chain crosses the membrane as a helical span at residues 29–49 (LSLLSVFVFAIFLVNFAVIIG). Ser337 acts as the Acyl-ester intermediate in catalysis. PASTA domains are found at residues 632–691 (QQSP…ILSD) and 692–750 (KAEE…TLGD).

Belongs to the transpeptidase family.

The protein resides in the cell membrane. In terms of biological role, a transpeptidase that forms peptide cross-links between adjacent glycan strands in cell wall peptidoglycan (PG). Part of the divisome machinery that synthesizes the septal cross wall. Beta-lactams inactivate the PBPs by acylating an essential serine residue in the active site of these proteins. In Streptococcus pneumoniae serotype 4 (strain ATCC BAA-334 / TIGR4), this protein is Penicillin-binding protein 2x (pbpX).